The following is a 377-amino-acid chain: N5-carboxyaminoimidazole ribonucleotide synthase (377 aa).

ATP contacts are provided by residues Arg-93, Lys-133, 138–144 (GYDGKGQ), 175–178 (EEFV), Glu-183, His-206, and 257–258 (NE). One can recognise an ATP-grasp domain in the interval 97 to 287 (KALLDRAQVA…QFENHLRAVC (191 aa)).

This sequence belongs to the PurK/PurT family. As to quaternary structure, homodimer.

It carries out the reaction 5-amino-1-(5-phospho-beta-D-ribosyl)imidazole + hydrogencarbonate + ATP = 5-carboxyamino-1-(5-phospho-D-ribosyl)imidazole + ADP + phosphate + 2 H(+). The protein operates within purine metabolism; IMP biosynthesis via de novo pathway; 5-amino-1-(5-phospho-D-ribosyl)imidazole-4-carboxylate from 5-amino-1-(5-phospho-D-ribosyl)imidazole (N5-CAIR route): step 1/2. Functionally, catalyzes the ATP-dependent conversion of 5-aminoimidazole ribonucleotide (AIR) and HCO(3)(-) to N5-carboxyaminoimidazole ribonucleotide (N5-CAIR). This is N5-carboxyaminoimidazole ribonucleotide synthase from Vibrio cholerae serotype O1 (strain ATCC 39315 / El Tor Inaba N16961).